Consider the following 332-residue polypeptide: Biotin synthase (332 aa).

Residues 53–282 (YFGKKVKLNM…SKEIRISGGR (230 aa)) form the Radical SAM core domain. [4Fe-4S] cluster-binding residues include Cys-71, Cys-75, and Cys-78. Residues Cys-115, Cys-147, Cys-207, and Arg-277 each coordinate [2Fe-2S] cluster.

Belongs to the radical SAM superfamily. Biotin synthase family. In terms of assembly, homodimer. The cofactor is [4Fe-4S] cluster. Requires [2Fe-2S] cluster as cofactor.

It catalyses the reaction (4R,5S)-dethiobiotin + (sulfur carrier)-SH + 2 reduced [2Fe-2S]-[ferredoxin] + 2 S-adenosyl-L-methionine = (sulfur carrier)-H + biotin + 2 5'-deoxyadenosine + 2 L-methionine + 2 oxidized [2Fe-2S]-[ferredoxin]. It functions in the pathway cofactor biosynthesis; biotin biosynthesis; biotin from 7,8-diaminononanoate: step 2/2. Functionally, catalyzes the conversion of dethiobiotin (DTB) to biotin by the insertion of a sulfur atom into dethiobiotin via a radical-based mechanism. The chain is Biotin synthase from Bacillus cytotoxicus (strain DSM 22905 / CIP 110041 / 391-98 / NVH 391-98).